Consider the following 135-residue polypeptide: Transcriptional regulator HosA (135 aa).

The HTH marR-type domain maps to 4 to 134 (RNKAFHQLRQ…FMQLVRKMMN (131 aa)). Positions 48–71 (QVALIEAAVSTKATLAEMLARMEN) form a DNA-binding region, H-T-H motif.

Involved in the temperature-dependent positive control of flagellum-driven swimming motility and cellular aggregation. Regulates fliC expression by directly interacting with fliC promoter. This chain is Transcriptional regulator HosA (hosA), found in Escherichia coli O127:H6 (strain E2348/69 / EPEC).